The following is a 407-amino-acid chain: Argininosuccinate synthase (407 aa).

Residues 13-21 (AYSGGLDTS) and A40 contribute to the ATP site. L-citrulline is bound by residues Y91 and S96. ATP is bound at residue G121. L-aspartate is bound by residues T123, N127, and D128. N127 is an L-citrulline binding site. Positions 131, 182, 191, 267, and 279 each coordinate L-citrulline.

This sequence belongs to the argininosuccinate synthase family. Type 1 subfamily. Homotetramer.

The protein resides in the cytoplasm. It carries out the reaction L-citrulline + L-aspartate + ATP = 2-(N(omega)-L-arginino)succinate + AMP + diphosphate + H(+). It functions in the pathway amino-acid biosynthesis; L-arginine biosynthesis; L-arginine from L-ornithine and carbamoyl phosphate: step 2/3. This chain is Argininosuccinate synthase, found in Bartonella bacilliformis (strain ATCC 35685 / KC583 / Herrer 020/F12,63).